The chain runs to 271 residues: Probable redox regulatory protein SCO3349 (271 aa).

2 disordered regions span residues 1 to 21 (MPKTKKAKDEKSAKKDKKHIA) and 109 to 130 (AEGTRNGWTSEDDEGSRQTRPF). Basic and acidic residues predominate over residues 7–21 (AKDEKSAKKDKKHIA).

It belongs to the Rv0495c family.

Functionally, essential for maintaining intracellular redox homeostasis. This is Probable redox regulatory protein SCO3349 from Streptomyces coelicolor (strain ATCC BAA-471 / A3(2) / M145).